Here is a 279-residue protein sequence, read N- to C-terminus: 32 kDa beta-galactoside-binding lectin (279 aa).

Galectin domains lie at 13 to 144 and 152 to 279; these read YRSV…VHWG and YESG…IQIQ. 213 to 219 is a binding site for a beta-D-galactoside; the sequence is WGNEERE.

Post-translationally, the N-terminus is blocked.

Its function is as follows. Binds galactose. The chain is 32 kDa beta-galactoside-binding lectin (lec-1) from Caenorhabditis elegans.